The primary structure comprises 174 residues: Transcriptional repressor NrdR (174 aa).

Residues Cys3–Cys34 fold into a zinc finger. The ATP-cone domain occupies Pro49–Asp139.

This sequence belongs to the NrdR family. Zn(2+) serves as cofactor.

In terms of biological role, negatively regulates transcription of bacterial ribonucleotide reductase nrd genes and operons by binding to NrdR-boxes. The polypeptide is Transcriptional repressor NrdR (Xanthomonas oryzae pv. oryzae (strain MAFF 311018)).